A 303-amino-acid chain; its full sequence is Deoxyhypusine hydroxylase (303 aa).

Residue Met1 is modified to N-acetylmethionine. 6 HEAT-like PBS-type repeats span residues 23–49 (ARFR…AFDD), 54–80 (LKHE…VLRD), 87–113 (VRHE…YSTD), 175–201 (DRYR…GLRC), 206–232 (FRHE…ALAQ), and 239–265 (VRHE…HVAD). Residues His56, His89, and Glu90 each contribute to the Fe cation site. The Fe cation site is built by His208, His241, and Glu242.

This sequence belongs to the deoxyhypusine hydroxylase family. Fe(2+) serves as cofactor.

It carries out the reaction [eIF5A protein]-deoxyhypusine + AH2 + O2 = [eIF5A protein]-hypusine + A + H2O. Its pathway is protein modification; eIF5A hypusination. Catalyzes the hydroxylation of the N(6)-(4-aminobutyl)-L-lysine intermediate produced by deoxyhypusine synthase/DHPS on a critical lysine of the eukaryotic translation initiation factor 5A/eIF-5A. This is the second step of the post-translational modification of that lysine into an unusual amino acid residue named hypusine. Hypusination is unique to mature eIF-5A factor and is essential for its function. This Bos taurus (Bovine) protein is Deoxyhypusine hydroxylase.